Here is a 277-residue protein sequence, read N- to C-terminus: Prohibitin-3, mitochondrial (277 aa).

Glycine 2 carries the post-translational modification N-acetylglycine. Over 2–6 the chain is Mitochondrial matrix; sequence GSQQA. Residues 7–28 traverse the membrane as a helical; Signal-anchor for type II membrane protein segment; sequence AVSFLSNLAKAAFGLGTAATVL. Over 29 to 277 the chain is Mitochondrial intermembrane; the sequence is NTSLFTVDGG…GQSMLFALNR (249 aa).

The protein belongs to the prohibitin family. Component of a prohibitin multimeric complex in mitochondrial membranes. Mostly expressed in proliferative tissues, including vasculature, shoot and root apical tissues. Expressed in roots, stems, leaves and flowers (at protein level).

The protein localises to the cell membrane. It localises to the mitochondrion inner membrane. It is found in the nucleus. Its subcellular location is the cytoplasm. Its function is as follows. Prohibitin probably acts as a holdase/unfoldase for the stabilization of newly synthesized mitochondrial proteins. Necessary for mitochondrial and cell metabolism and biogenesis. Required to regulate the ethylene-mediated signaling; involved in growth maintenance in the presence of ethylene. Functions in nitric oxide (NO)-mediated responses and in hydrogen peroxide-induced NO accumulation. This is Prohibitin-3, mitochondrial (PHB3) from Arabidopsis thaliana (Mouse-ear cress).